The sequence spans 31 residues: GCIKTGSFCTLSKGCCTKNCGWNFHCNPPNQ.

Disulfide bonds link Cys-2–Cys-16, Cys-9–Cys-20, and Cys-15–Cys-26. 4-hydroxyproline is present on residues Pro-28 and Pro-29.

Belongs to the nemertide family. In terms of tissue distribution, confined to the epidermis and to the mucus layer.

It localises to the secreted. In terms of biological role, highly potent toxin against both insect and some mammalian sodium channels (Nav). It potently inhibits inactivation of insect sodium channels of B.germanica (BgNav1) (EC(50)=2.6 nM) and also delays the inactivation of mammalian Nav with potent activity on Nav1.1/SCN1A (hNav1.1/SCN1A; EC(50)=7.9 nM, rNav1.2/SCN2A; EC(50)=24.3 nM, rNav1.3/SCN3A; EC(50)=105.6 nM, rNav1.4/SCN4A; EC(50)=46.4 nM, hNav1.5/SCN5A; EC(50)=215.2 nM, mNav1.6/SCN8A; EC(50)=36.3 nM, hNav1.9/SCN9A; EC(50)=97.2 nM). 1 uM is enough to completely inhibits the inactivation, resulting in sustained non-inactivating currents. In addition, the toxin significantly enhances the recovery from inactivation, and the open state is not required for the toxin to interact with the channel. In vivo, injection into brine shrimp (Artemia salina) stops movement or causes death after 24 hours (EC(50)=2.8 uM). The polypeptide is Nemertide alpha-6 (Lineus sanguineus (Ribbon worm)).